We begin with the raw amino-acid sequence, 390 residues long: Levoglucosan dehydrogenase (390 aa).

Phenylalanine 13, methionine 14, glutamate 43, threonine 81, asparagine 83, histidine 86, glutamate 103, lysine 104, alanine 130, and asparagine 132 together coordinate NADH. Lysine 104 serves as a coordination point for levoglucosan. Levoglucosan-binding residues include tyrosine 133 and glutamine 163. NADH contacts are provided by tryptophan 175 and arginine 176. The levoglucosan site is built by arginine 176, aspartate 189, and histidine 193. Tyrosine 335 contacts NADH.

This sequence belongs to the Gfo/Idh/MocA family. In terms of assembly, homotetramer.

The enzyme catalyses levoglucosan + NAD(+) = 3-dehydrolevoglucosan + NADH + H(+). Functionally, catalyzes the oxidation of levoglucosan (1,6-anhydro-beta-D-glucose, LG) to 3-dehydrolevoglucosan (3-keto-LG). Exhibits high substrate specificity toward levoglucosan and NAD(+) for the oxidative reaction. Exhibits weak activities (about 4% compared with that of LG) toward L-sorbose and 1,5-anhydro-D-glucitol, and activity toward D-xylose is also detectable (1.7%). Can also efficiently catalyzes the NADH-dependent reduction (reverse reaction) of 3-keto-LG. This Pseudarthrobacter phenanthrenivorans (strain DSM 18606 / JCM 16027 / LMG 23796 / Sphe3) (Arthrobacter phenanthrenivorans) protein is Levoglucosan dehydrogenase.